The sequence spans 177 residues: Large ribosomal subunit protein uL6 (177 aa).

Belongs to the universal ribosomal protein uL6 family. As to quaternary structure, part of the 50S ribosomal subunit.

Its function is as follows. This protein binds to the 23S rRNA, and is important in its secondary structure. It is located near the subunit interface in the base of the L7/L12 stalk, and near the tRNA binding site of the peptidyltransferase center. This chain is Large ribosomal subunit protein uL6, found in Thioalkalivibrio sulfidiphilus (strain HL-EbGR7).